The chain runs to 350 residues: MAPSWLFLLFIPGMVGSSRSCFPGCQCIVDNFGLFHSFSLTKVDCSGVGPHVVPVSIPLDTSYLDLSANGIKRINESVLSGPGYTTLINLNLSHNQIVRISFSTFSKLRYLESLDLSHNLLETLPDGSFLYSRLTELDLSSNKLLEVGIGAFTLKSQGRSMTINLGNNNIRSIHRGAERPVPNIHSLTLSGNDLLSVPDLHGIPLRHLDLDRNPLAKIEKESFLGLEGLTHLSLSDLPNLREVSPYSFKTLPSLLDLDLSSNPQLKSLSSDMFFGLDSLQELNLAYSGVAALPKDIMLNLPSMKSITWGENIRCSKTVKESPFHAQKGRVREEVLLCHDDYGAVPAQDVL.

An N-terminal signal peptide occupies residues M1–S17. The region spanning S18–L59 is the LRRNT domain. LRR repeat units follow at residues D60 to G81, T86 to K107, Y110 to Y131, R133 to L154, R159 to P180, N183 to I203, P204 to G225, G228 to T250, S253 to G275, and S278 to N299. Residues N75 and N91 are each glycosylated (N-linked (GlcNAc...) asparagine).

As to quaternary structure, interacts with bmp4. Interacts with dll1 (via extracellular region). Interacts with fgf8; inhibits fgf8 signaling. Interacts with nodal2/Xnr2; enhances nodal2 activity.

It is found in the secreted. Contributes to various developmental events through its interactions with multiple signaling pathways. Dorsalizing factor which functions as an inhibitor of bone morphogenetic proteins (BMP) during gastrulation. Promotes dll1-dependent activation of Notch signaling and is required for neural crest formation. Induces endoderm and dorsal mesoderm formation by enhancing nodal2/Xnr2 activity while inhibiting ventrolateral mesoderm formation through inhibition of fgf8. In Xenopus tropicalis (Western clawed frog), this protein is Tsukushi (tsku).